The sequence spans 123 residues: Small ribosomal subunit protein uS12 (123 aa).

Position 89 is a 3-methylthioaspartic acid (D89).

This sequence belongs to the universal ribosomal protein uS12 family. In terms of assembly, part of the 30S ribosomal subunit. Contacts proteins S8 and S17. May interact with IF1 in the 30S initiation complex.

In terms of biological role, with S4 and S5 plays an important role in translational accuracy. Functionally, interacts with and stabilizes bases of the 16S rRNA that are involved in tRNA selection in the A site and with the mRNA backbone. Located at the interface of the 30S and 50S subunits, it traverses the body of the 30S subunit contacting proteins on the other side and probably holding the rRNA structure together. The combined cluster of proteins S8, S12 and S17 appears to hold together the shoulder and platform of the 30S subunit. The protein is Small ribosomal subunit protein uS12 of Caulobacter vibrioides (strain ATCC 19089 / CIP 103742 / CB 15) (Caulobacter crescentus).